A 427-amino-acid polypeptide reads, in one-letter code: UPF0229 protein YeaH (427 aa).

A compositionally biased stretch (basic and acidic residues) spans 79-90 (NDHFVQNDRIER). Residues 79–110 (NDHFVQNDRIERPQGGGGGSGSGQGQASQDGE) are disordered. Gly residues predominate over residues 92–102 (QGGGGGSGSGQ).

This sequence belongs to the UPF0229 family.

The protein is UPF0229 protein YeaH of Escherichia coli O127:H6 (strain E2348/69 / EPEC).